A 101-amino-acid chain; its full sequence is MAKVSSVQKNLKRSRLFNKLKLKRQALKSKIYDKNLSLEERFNLVLKLSKLPRNSSSTRIRNRCAETGRPRGYYRKFKLCRNIIRELAGSGIIPGLRKSSW.

The protein belongs to the universal ribosomal protein uS14 family. In terms of assembly, part of the 30S ribosomal subunit. Contacts proteins S3 and S10.

Functionally, binds 16S rRNA, required for the assembly of 30S particles and may also be responsible for determining the conformation of the 16S rRNA at the A site. This is Small ribosomal subunit protein uS14 from Orientia tsutsugamushi (strain Boryong) (Rickettsia tsutsugamushi).